The following is a 115-amino-acid chain: NADH-ubiquinone oxidoreductase chain 3 (115 aa).

The next 3 membrane-spanning stretches (helical) occupy residues 4–24 (LTAL…AFWL), 55–75 (FFLV…LLPL), and 83–103 (YINI…LGLA).

This sequence belongs to the complex I subunit 3 family. As to quaternary structure, core subunit of respiratory chain NADH dehydrogenase (Complex I) which is composed of 45 different subunits. Interacts with TMEM186. Interacts with TMEM242.

It is found in the mitochondrion inner membrane. The catalysed reaction is a ubiquinone + NADH + 5 H(+)(in) = a ubiquinol + NAD(+) + 4 H(+)(out). Functionally, core subunit of the mitochondrial membrane respiratory chain NADH dehydrogenase (Complex I) which catalyzes electron transfer from NADH through the respiratory chain, using ubiquinone as an electron acceptor. Essential for the catalytic activity of complex I. This chain is NADH-ubiquinone oxidoreductase chain 3, found in Peromyscus polionotus (Oldfield mouse).